The sequence spans 69 residues: DNA-directed RNA polymerase subunit omega (69 aa).

Belongs to the RNA polymerase subunit omega family. In terms of assembly, the RNAP catalytic core consists of 2 alpha, 1 beta, 1 beta' and 1 omega subunit. When a sigma factor is associated with the core the holoenzyme is formed, which can initiate transcription.

It catalyses the reaction RNA(n) + a ribonucleoside 5'-triphosphate = RNA(n+1) + diphosphate. Functionally, promotes RNA polymerase assembly. Latches the N- and C-terminal regions of the beta' subunit thereby facilitating its interaction with the beta and alpha subunits. This Carboxydothermus hydrogenoformans (strain ATCC BAA-161 / DSM 6008 / Z-2901) protein is DNA-directed RNA polymerase subunit omega.